A 453-amino-acid polypeptide reads, in one-letter code: Tol-Pal system protein TolB (453 aa).

An N-terminal signal peptide occupies residues 1-34 (MYLIIKKTHKLPHWLQKVSLSIMLIIFLWKPALL).

Belongs to the TolB family. As to quaternary structure, the Tol-Pal system is composed of five core proteins: the inner membrane proteins TolA, TolQ and TolR, the periplasmic protein TolB and the outer membrane protein Pal. They form a network linking the inner and outer membranes and the peptidoglycan layer.

It localises to the periplasm. Part of the Tol-Pal system, which plays a role in outer membrane invagination during cell division and is important for maintaining outer membrane integrity. TolB occupies a key intermediary position in the Tol-Pal system because it communicates directly with both membrane-embedded components, Pal in the outer membrane and TolA in the inner membrane. The polypeptide is Tol-Pal system protein TolB (Blochmanniella pennsylvanica (strain BPEN)).